Consider the following 457-residue polypeptide: Succinate-semialdehyde dehydrogenase [NADP(+)] 1 (457 aa).

Glycine 209 to glycine 214 is a binding site for NADP(+). Catalysis depends on residues glutamate 231 and cysteine 265.

The protein belongs to the aldehyde dehydrogenase family.

The catalysed reaction is succinate semialdehyde + NAD(+) + H2O = succinate + NADH + 2 H(+). It catalyses the reaction succinate semialdehyde + NADP(+) + H2O = succinate + NADPH + 2 H(+). Catalyzes the NADP(+)-dependent oxidation of succinate semialdehyde to succinate. It is believed to be the main source of succinate semialdehyde dehydrogenase activity in Mycobacterium. The polypeptide is Succinate-semialdehyde dehydrogenase [NADP(+)] 1 (gabD1) (Mycobacterium bovis (strain ATCC BAA-935 / AF2122/97)).